Consider the following 405-residue polypeptide: MARAIILMADSLGIGAAPDADKFGDIGANTLAHLLKAYYDETGTALSLPNLSKLGLIDACEAAGKEPCLVSNRSASQGAWGYAKELSSGKDTPSGHWEMAGVPVLFDWGYFPKTQPSFPQEFIDELIARTGIPGILGNCHASGTTILEQLGEEHVKTGKPICYTSADSVFQIAAHEESFGLEKLYQVCETARSLLDEMNIGRVIARPFLGSNNQDFARTSNRRDYSVLPPAPTLLDVLAKDGGEVISIGKISDIYAHQGITQKHKAPGLINLLKKTNELMQSAPDHSLIFTNLVDFDEMFGHRRNPVGYAKALKEFDDYLPTILNALKADDLLIITADHGCDPTFPGSEHTREYVPVIAYQPGMTDIPLGERNSFADIGQTLAQWFNLPALEYGDGFIDKLTTSK.

The Mn(2+) site is built by Asp-10, Asp-297, His-302, Asp-338, His-339, and His-350.

This sequence belongs to the phosphopentomutase family. Requires Mn(2+) as cofactor.

The protein localises to the cytoplasm. It catalyses the reaction 2-deoxy-alpha-D-ribose 1-phosphate = 2-deoxy-D-ribose 5-phosphate. The catalysed reaction is alpha-D-ribose 1-phosphate = D-ribose 5-phosphate. It participates in carbohydrate degradation; 2-deoxy-D-ribose 1-phosphate degradation; D-glyceraldehyde 3-phosphate and acetaldehyde from 2-deoxy-alpha-D-ribose 1-phosphate: step 1/2. Functionally, isomerase that catalyzes the conversion of deoxy-ribose 1-phosphate (dRib-1-P) and ribose 1-phosphate (Rib-1-P) to deoxy-ribose 5-phosphate (dRib-5-P) and ribose 5-phosphate (Rib-5-P), respectively. This Pseudoalteromonas translucida (strain TAC 125) protein is Phosphopentomutase.